We begin with the raw amino-acid sequence, 241 residues long: Neuroendocrine secretory protein 55 (241 aa).

The signal sequence occupies residues M1–A46. The disordered stretch occupies residues A71–H241. The segment covering E97 to S125 has biased composition (acidic residues). A compositionally biased stretch (low complexity) spans P167–S177. Over residues E182–P198 the composition is skewed to basic and acidic residues. Residues Q212–T221 show a composition bias toward basic residues.

It belongs to the NESP55 family. In terms of processing, binds keratan sulfate chains. Post-translationally, may be proteolytically processed to give rise to a number of active peptides. In terms of tissue distribution, highly expressed in adrenal medulla and anterior and posterior pituitary. In the brain, detected in hypothalamus, hippocampus, caudate nucleus, thalamus and, in significantly lower amounts, in the cerebellum.

It localises to the cytoplasmic vesicle. The protein localises to the secretory vesicle. Its subcellular location is the secreted. The sequence is that of Neuroendocrine secretory protein 55 from Bos taurus (Bovine).